A 340-amino-acid chain; its full sequence is Nucleoid-associated protein PSPA7_4451 (340 aa).

The protein belongs to the YejK family.

Its subcellular location is the cytoplasm. The protein resides in the nucleoid. This Pseudomonas paraeruginosa (strain DSM 24068 / PA7) (Pseudomonas aeruginosa (strain PA7)) protein is Nucleoid-associated protein PSPA7_4451.